Here is a 376-residue protein sequence, read N- to C-terminus: 1-acyl-sn-glycerol-3-phosphate acyltransferase gamma (376 aa).

The Cytoplasmic segment spans residues 1–124; it reads MGLLAFLKTQ…LGSSKVLAKK (124 aa). The short motif at 96–101 is the HXXXXD motif element; it reads HNFEID. The helical transmembrane segment at 125–145 threads the bilayer; that stretch reads ELLYVPLIGWTWYFLEIVFCK. At 146–316 the chain is on the lumenal side; sequence RKWEEDRDTV…TLLNFLSWAT (171 aa). Residues 317–339 form a helical membrane-spanning segment; sequence ILLSPLFSFVLGVFASGSPLLIL. Residues 340–376 lie on the Cytoplasmic side of the membrane; that stretch reads TFLGFVGAASFGVRRLIGVTEIEKGSSYGNQEFKKKE.

It belongs to the 1-acyl-sn-glycerol-3-phosphate acyltransferase family. Widely expressed with highest levels in testis, pancreas and kidney, followed by spleen, lung, adipose tissue and liver.

It localises to the endoplasmic reticulum membrane. It is found in the nucleus envelope. The catalysed reaction is a 1-acyl-sn-glycero-3-phosphate + an acyl-CoA = a 1,2-diacyl-sn-glycero-3-phosphate + CoA. It catalyses the reaction pentadecanoyl-CoA + 1-(9Z-octadecenoyl)-sn-glycero-3-phosphate = 1-(9Z)-octadecenoyl-2-pentadecanoyl-sn-glycero-3-phosphate + CoA. The enzyme catalyses heptadecanoyl-CoA + 1-(9Z-octadecenoyl)-sn-glycero-3-phosphate = 1-(9Z)-octadecenoyl-2-heptadecanoyl-sn-glycero-3-phosphate + CoA. It carries out the reaction 1-(9Z-octadecenoyl)-sn-glycero-3-phosphate + octadecanoyl-CoA = 1-(9Z-octadecenoyl)-2-octadecanoyl-sn-glycero-3-phosphate + CoA. The catalysed reaction is nonadecanoyl-CoA + 1-(9Z-octadecenoyl)-sn-glycero-3-phosphate = 1-(9Z)-octadecenoyl-2-nonadecanoyl-sn-glycero-3-phosphate + CoA. It catalyses the reaction 1-(9Z-octadecenoyl)-sn-glycero-3-phosphate + (5Z,8Z,11Z,14Z)-eicosatetraenoyl-CoA = 1-(9Z)-octadecenoyl-2-(5Z,8Z,11Z,14Z)-eicosatetraenoyl-sn-glycero-3-phosphate + CoA. The enzyme catalyses 1-(9Z-octadecenoyl)-sn-glycero-3-phosphate + (9Z)-octadecenoyl-CoA = 1,2-di-(9Z-octadecenoyl)-sn-glycero-3-phosphate + CoA. It carries out the reaction 1-(9Z-octadecenoyl)-sn-glycero-3-phosphate + (9Z,12Z)-octadecadienoyl-CoA = 1-(9Z)-octadecenoyl-2-(9Z,12Z)-octadecadienoyl-sn-glycero-3-phosphate + CoA. The catalysed reaction is 1-(9Z-octadecenoyl)-sn-glycero-3-phosphocholine + (5Z,8Z,11Z,14Z)-eicosatetraenoyl-CoA = 1-(9Z)-octadecenoyl-2-(5Z,8Z,11Z,14Z)-icosatetraenoyl-sn-glycero-3-phosphocholine + CoA. It catalyses the reaction 1-(9Z-octadecenoyl)-sn-glycero-3-phospho-(1D-myo-inositol) + (5Z,8Z,11Z,14Z)-eicosatetraenoyl-CoA = 1-(9Z-octadecenoyl)-2-(5Z,8Z,11Z,14Z-eicosatetraenoyl)-sn-glycero-3-phospho-1D-myo-inositol + CoA. The enzyme catalyses 1-(9Z-octadecenoyl)-sn-glycero-3-phospho-L-serine + (5Z,8Z,11Z,14Z)-eicosatetraenoyl-CoA = 1-(9Z-octadecenoyl)-2-(5Z,8Z,11Z,14Z-eicosatetraenoyl)-sn-glycero-3-phospho-L-serine + CoA. It carries out the reaction 1-hexadecanoyl-sn-glycero-3-phosphate + (9Z)-octadecenoyl-CoA = 1-hexadecanoyl-2-(9Z-octadecenoyl)-sn-glycero-3-phosphate + CoA. The catalysed reaction is 1-hexadecanoyl-sn-glycero-3-phosphate + (5Z,8Z,11Z,14Z)-eicosatetraenoyl-CoA = 1-hexadecanoyl-2-(5Z,8Z,11Z,14Z-eicosatetraenoyl)-sn-glycero-3-phosphate + CoA. It catalyses the reaction 1-heptadecanoyl-sn-glycero-3-phosphate + (5Z,8Z,11Z,14Z)-eicosatetraenoyl-CoA = 1-heptadecanoyl-2-(5Z,8Z,11Z,14Z)-eicosatetraenoyl-sn-glycero-3-phosphate + CoA. The enzyme catalyses 1-octadecanoyl-sn-glycero-3-phosphate + (9Z)-octadecenoyl-CoA = 1-octadecanoyl-2-(9Z-octadecenoyl)-sn-glycero-3-phosphate + CoA. It carries out the reaction 1-octadecanoyl-sn-glycero-3-phosphate + (5Z,8Z,11Z,14Z)-eicosatetraenoyl-CoA = 1-octadecanoyl-2-(5Z,8Z,11Z,14Z-eicosatetraenoyl)-sn-glycero-3-phosphate + CoA. The catalysed reaction is 1-(9Z-octadecenoyl)-sn-glycero-3-phosphate + hexadecanoyl-CoA = 1-hexadecanoyl-2-(9Z-octadecenoyl)-sn-glycero-3-phosphate + CoA. It catalyses the reaction 1-O-(9Z-octadecenyl)-sn-glycero-3-phosphate + (5Z,8Z,11Z,14Z)-eicosatetraenoyl-CoA = 1-O-(9Z-octadecenyl)-2-(5Z,8Z,11Z,14Z-eicosatetraenoyl)-sn-glycero-3-phosphate + CoA. The enzyme catalyses a 1-acyl-sn-glycero-3-phospho-(1D-myo-inositol) + (5Z,8Z,11Z,14Z)-eicosatetraenoyl-CoA = a 1-acyl-2-(5Z,8Z,11Z,14Z-eicosatetraenoyl)-sn-glycero-3-phospho-(1D-myo-inositol) + CoA. It participates in phospholipid metabolism; CDP-diacylglycerol biosynthesis; CDP-diacylglycerol from sn-glycerol 3-phosphate: step 2/3. Converts 1-acyl-sn-glycerol-3-phosphate (lysophosphatidic acid or LPA) into 1,2-diacyl-sn-glycerol-3-phosphate (phosphatidic acid or PA) by incorporating an acyl moiety at the sn-2 position of the glycerol backbone. Acts on LPA containing saturated or unsaturated fatty acids C16:0-C20:4 at the sn-1 position using C18:1, C20:4 or C18:2-CoA as the acyl donor. Also acts on lysophosphatidylcholine, lysophosphatidylinositol and lysophosphatidylserine using C18:1 or C20:4-CoA. Has a preference for arachidonoyl-CoA as a donor. Also has a modest lysophosphatidylinositol acyltransferase (LPIAT) activity, converts lysophosphatidylinositol (LPI) into phosphatidylinositol. This Homo sapiens (Human) protein is 1-acyl-sn-glycerol-3-phosphate acyltransferase gamma (AGPAT3).